The chain runs to 367 residues: Phosphoribosylaminoimidazole-succinocarboxamide synthase (367 aa).

It belongs to the SAICAR synthetase family.

It carries out the reaction 5-amino-1-(5-phospho-D-ribosyl)imidazole-4-carboxylate + L-aspartate + ATP = (2S)-2-[5-amino-1-(5-phospho-beta-D-ribosyl)imidazole-4-carboxamido]succinate + ADP + phosphate + 2 H(+). Its pathway is purine metabolism; IMP biosynthesis via de novo pathway; 5-amino-1-(5-phospho-D-ribosyl)imidazole-4-carboxamide from 5-amino-1-(5-phospho-D-ribosyl)imidazole-4-carboxylate: step 1/2. This is Phosphoribosylaminoimidazole-succinocarboxamide synthase from Shewanella sp. (strain ANA-3).